The chain runs to 267 residues: MIGREYQKYYTPTFFDFVALICAWAFLLLTFPVSIFFCVKIVKEYDRMVIFRLGRLWQDNPRGPGIVLVLPFIDSHKTVDLRVMSYDVPTQEMLTRDSVTIGVDAAVYYRTSDPIASLARVNDAHMSTRQLAQSSLRNVLGTRSLAELMTDRHGIAVQVKYILDSATLFWGIHVERVEIKDIRLPREMCRAMAAEAEAQRESDAKVVTAQGELDASMAFQKAADELAGSPTALQLRYLQTLVKISAHDNHTIVVPFPMEYIKKKIRK.

Residues 17–37 (FVALICAWAFLLLTFPVSIFF) form a helical membrane-spanning segment.

The protein belongs to the band 7/mec-2 family.

It localises to the membrane. This is Stomatin-3 (sto-3) from Caenorhabditis elegans.